The following is a 228-amino-acid chain: Cytochrome c oxidase subunit 2 (228 aa).

The Mitochondrial intermembrane segment spans residues 1–14; that stretch reads MAYPLQLGFQDATS. A helical membrane pass occupies residues 15–45; sequence PVMEELLHFHDHTLMIIFLISSLVLYIIMLM. At 46-59 the chain is on the mitochondrial matrix side; that stretch reads LTSKLVHTNMMNVQ. Residues 60–87 form a helical membrane-spanning segment; the sequence is EMEMIWTILPAIILILIALPSLHTLYMM. The Mitochondrial intermembrane portion of the chain corresponds to 88-228; it reads DEINNPLLTI…FENWSASLAQ (141 aa). Positions 161, 196, 198, 200, 204, and 207 each coordinate Cu cation. Glu198 provides a ligand contact to Mg(2+). Residue Tyr218 is modified to Phosphotyrosine.

It belongs to the cytochrome c oxidase subunit 2 family. As to quaternary structure, component of the cytochrome c oxidase (complex IV, CIV), a multisubunit enzyme composed of 14 subunits. The complex is composed of a catalytic core of 3 subunits MT-CO1, MT-CO2 and MT-CO3, encoded in the mitochondrial DNA, and 11 supernumerary subunits COX4I, COX5A, COX5B, COX6A, COX6B, COX6C, COX7A, COX7B, COX7C, COX8 and NDUFA4, which are encoded in the nuclear genome. The complex exists as a monomer or a dimer and forms supercomplexes (SCs) in the inner mitochondrial membrane with NADH-ubiquinone oxidoreductase (complex I, CI) and ubiquinol-cytochrome c oxidoreductase (cytochrome b-c1 complex, complex III, CIII), resulting in different assemblies (supercomplex SCI(1)III(2)IV(1) and megacomplex MCI(2)III(2)IV(2)). Found in a complex with TMEM177, COA6, COX18, COX20, SCO1 and SCO2. Interacts with TMEM177 in a COX20-dependent manner. Interacts with COX20. Interacts with COX16. Cu cation is required as a cofactor.

It is found in the mitochondrion inner membrane. It carries out the reaction 4 Fe(II)-[cytochrome c] + O2 + 8 H(+)(in) = 4 Fe(III)-[cytochrome c] + 2 H2O + 4 H(+)(out). In terms of biological role, component of the cytochrome c oxidase, the last enzyme in the mitochondrial electron transport chain which drives oxidative phosphorylation. The respiratory chain contains 3 multisubunit complexes succinate dehydrogenase (complex II, CII), ubiquinol-cytochrome c oxidoreductase (cytochrome b-c1 complex, complex III, CIII) and cytochrome c oxidase (complex IV, CIV), that cooperate to transfer electrons derived from NADH and succinate to molecular oxygen, creating an electrochemical gradient over the inner membrane that drives transmembrane transport and the ATP synthase. Cytochrome c oxidase is the component of the respiratory chain that catalyzes the reduction of oxygen to water. Electrons originating from reduced cytochrome c in the intermembrane space (IMS) are transferred via the dinuclear copper A center (CU(A)) of subunit 2 and heme A of subunit 1 to the active site in subunit 1, a binuclear center (BNC) formed by heme A3 and copper B (CU(B)). The BNC reduces molecular oxygen to 2 water molecules using 4 electrons from cytochrome c in the IMS and 4 protons from the mitochondrial matrix. This is Cytochrome c oxidase subunit 2 (MT-CO2) from Loxodonta africana (African elephant).